The chain runs to 92 residues: Small ribosomal subunit protein uS19 (92 aa).

Belongs to the universal ribosomal protein uS19 family.

Protein S19 forms a complex with S13 that binds strongly to the 16S ribosomal RNA. The protein is Small ribosomal subunit protein uS19 of Orientia tsutsugamushi (strain Boryong) (Rickettsia tsutsugamushi).